Reading from the N-terminus, the 414-residue chain is Cytochrome b (414 aa).

A run of 2 helical transmembrane segments spans residues 40–60 (FFGS…VWLA) and 84–104 (GWLI…VIYL). The heme b site is built by His91 and His105. Transmembrane regions (helical) follow at residues 121–141 (LLWM…FFGY), 154–174 (QVIV…SVWV), 188–208 (FFAF…LHIV), 252–272 (LMGV…NPTM), 294–314 (IAPV…PPMY), 317–337 (QFPG…LPWL), 351–371 (IFKW…WLGI), and 378–398 (YTLL…LMPI). Residues His192 and His206 each contribute to the heme b site.

This sequence belongs to the cytochrome b family. As to quaternary structure, the main subunits of complex b-c1 are: cytochrome b, cytochrome c1 and the Rieske protein. Requires heme b as cofactor.

The protein resides in the cell membrane. Its function is as follows. Component of the ubiquinol-cytochrome c reductase complex (complex III or cytochrome b-c1 complex), which is a respiratory chain that generates an electrochemical potential coupled to ATP synthesis. This is Cytochrome b (petB) from Allochromatium vinosum (strain ATCC 17899 / DSM 180 / NBRC 103801 / NCIMB 10441 / D) (Chromatium vinosum).